A 248-amino-acid chain; its full sequence is Acetoacetyl-CoA reductase (248 aa).

Residues 14-16 (GGI), Arg-42, and 90-94 (NAGIT) each bind NADP(+). Substrate is bound by residues Asp-96 and 149–152 (QFGQ). The active-site Proton acceptor is the Tyr-155. Position 185–188 (185–188 (PGYT)) interacts with NADP(+). Substrate contacts are provided by residues 186–187 (GY) and Arg-197.

Belongs to the short-chain dehydrogenases/reductases (SDR) family.

The protein localises to the cytoplasm. It carries out the reaction a (3R)-3-hydroxyacyl-CoA + NADP(+) = a 3-oxoacyl-CoA + NADPH + H(+). Its pathway is biopolymer metabolism; poly-(R)-3-hydroxybutanoate biosynthesis. This chain is Acetoacetyl-CoA reductase (phaB), found in Acinetobacter sp. (strain RA3849).